The following is a 315-amino-acid chain: Cell division protein FtsZ (315 aa).

Residues 55-57, Glu98, Arg102, and Asp146 contribute to the GTP site; that span reads GTG.

This sequence belongs to the FtsZ family. As to quaternary structure, homodimer. Polymerizes to form a dynamic ring structure in a strictly GTP-dependent manner. Interacts directly with several other division proteins.

It is found in the cytoplasm. Its function is as follows. Essential cell division protein that forms a contractile ring structure (Z ring) at the future cell division site. The regulation of the ring assembly controls the timing and the location of cell division. One of the functions of the FtsZ ring is to recruit other cell division proteins to the septum to produce a new cell wall between the dividing cells. Binds GTP and shows GTPase activity. This chain is Cell division protein FtsZ, found in Wolbachia pipientis.